A 132-amino-acid polypeptide reads, in one-letter code: Small ribosomal subunit protein uS8 (132 aa).

Belongs to the universal ribosomal protein uS8 family. Part of the 30S ribosomal subunit. Contacts proteins S5 and S12.

Its function is as follows. One of the primary rRNA binding proteins, it binds directly to 16S rRNA central domain where it helps coordinate assembly of the platform of the 30S subunit. In Geobacter sulfurreducens (strain ATCC 51573 / DSM 12127 / PCA), this protein is Small ribosomal subunit protein uS8.